The following is a 415-amino-acid chain: DNA polymerase IV 2 (415 aa).

The UmuC domain occupies Ile7–Gly183. Residues Asp11 and Asp101 each contribute to the Mg(2+) site. The active site involves Glu102.

This sequence belongs to the DNA polymerase type-Y family. Monomer. Requires Mg(2+) as cofactor.

The protein resides in the cytoplasm. It catalyses the reaction DNA(n) + a 2'-deoxyribonucleoside 5'-triphosphate = DNA(n+1) + diphosphate. Functionally, poorly processive, error-prone DNA polymerase involved in untargeted mutagenesis. Copies undamaged DNA at stalled replication forks, which arise in vivo from mismatched or misaligned primer ends. These misaligned primers can be extended by PolIV. Exhibits no 3'-5' exonuclease (proofreading) activity. May be involved in translesional synthesis, in conjunction with the beta clamp from PolIII. This is DNA polymerase IV 2 (dinB2) from Mesorhizobium japonicum (strain LMG 29417 / CECT 9101 / MAFF 303099) (Mesorhizobium loti (strain MAFF 303099)).